Reading from the N-terminus, the 233-residue chain is Purine nucleoside phosphorylase DeoD-type (233 aa).

Residue H4 coordinates a purine D-ribonucleoside. Residues G20, R24, R43, and 87–90 (RIGT) contribute to the phosphate site. A purine D-ribonucleoside is bound by residues 179-181 (EME) and 203-204 (SD). D204 serves as the catalytic Proton donor.

Belongs to the PNP/UDP phosphorylase family. As to quaternary structure, homohexamer; trimer of homodimers.

The catalysed reaction is a purine D-ribonucleoside + phosphate = a purine nucleobase + alpha-D-ribose 1-phosphate. It catalyses the reaction a purine 2'-deoxy-D-ribonucleoside + phosphate = a purine nucleobase + 2-deoxy-alpha-D-ribose 1-phosphate. In terms of biological role, catalyzes the reversible phosphorolytic breakdown of the N-glycosidic bond in the beta-(deoxy)ribonucleoside molecules, with the formation of the corresponding free purine bases and pentose-1-phosphate. This Thermoanaerobacter pseudethanolicus (strain ATCC 33223 / 39E) (Clostridium thermohydrosulfuricum) protein is Purine nucleoside phosphorylase DeoD-type.